Reading from the N-terminus, the 97-residue chain is Glutamyl-tRNA(Gln) amidotransferase subunit C 2 (97 aa).

Belongs to the GatC family. As to quaternary structure, heterotrimer of A, B and C subunits.

The catalysed reaction is L-glutamyl-tRNA(Gln) + L-glutamine + ATP + H2O = L-glutaminyl-tRNA(Gln) + L-glutamate + ADP + phosphate + H(+). It carries out the reaction L-aspartyl-tRNA(Asn) + L-glutamine + ATP + H2O = L-asparaginyl-tRNA(Asn) + L-glutamate + ADP + phosphate + 2 H(+). Allows the formation of correctly charged Asn-tRNA(Asn) or Gln-tRNA(Gln) through the transamidation of misacylated Asp-tRNA(Asn) or Glu-tRNA(Gln) in organisms which lack either or both of asparaginyl-tRNA or glutaminyl-tRNA synthetases. The reaction takes place in the presence of glutamine and ATP through an activated phospho-Asp-tRNA(Asn) or phospho-Glu-tRNA(Gln). This chain is Glutamyl-tRNA(Gln) amidotransferase subunit C 2 (gatC2), found in Clostridium acetobutylicum (strain ATCC 824 / DSM 792 / JCM 1419 / IAM 19013 / LMG 5710 / NBRC 13948 / NRRL B-527 / VKM B-1787 / 2291 / W).